The following is a 498-amino-acid chain: Zinc finger protein 682 (498 aa).

The region spanning 4–75 is the KRAB domain; it reads LTFRDVTIEF…KRHETIAKPP (72 aa). 10 C2H2-type zinc fingers span residues 173–195, 201–223, 229–251, 257–279, 285–307, 313–335, 341–363, 369–391, 397–419, and 425–447; these read FKCM…KIIH, CICE…KRIH, YKCE…KRIH, YKCE…KKIH, YTCE…KTIH, YKCK…ERTH, YKCE…KVIH, and YNCE…KKIH. Residues 453–475 form a C2H2-type 11; degenerate zinc finger; it reads YKCEECGKAFKRCSHLNEHKRVQ.

This sequence belongs to the krueppel C2H2-type zinc-finger protein family.

It localises to the nucleus. May be involved in transcriptional regulation. The polypeptide is Zinc finger protein 682 (ZNF682) (Homo sapiens (Human)).